The following is an 81-amino-acid chain: Toxin MIT1 (81 aa).

5 disulfide bridges follow: C7–C19, C13–C31, C18–C59, C41–C67, and C61–C77.

Belongs to the AVIT (prokineticin) family. As to expression, expressed by the venom gland.

The protein localises to the secreted. Functionally, potent agonist for both PKR1/PROKR1 and PKR2/PROKR2. Potently contracts gastrointestinal (GI) smooth muscle. The protein is Toxin MIT1 of Dendroaspis polylepis polylepis (Black mamba).